Consider the following 439-residue polypeptide: DNA 3'-5' translocase XPB2 (439 aa).

Positions Met-1–Val-54 are DRD domain. In terms of domain architecture, Helicase ATP-binding spans Val-77–Val-221. Residues Leu-90–Thr-97 and Arg-127 contribute to the ATP site. Residues Asp-174–His-177 carry the DEAH box motif. Positions Arg-205–Asp-207 match the RED motif motif. The segment at Glu-227–Ile-234 is flexible hinge region. The tract at residues Asn-248–Asn-307 is thM region. In terms of domain architecture, Helicase C-terminal spans Lys-311–Glu-439.

It belongs to the helicase family. RAD25/XPB subfamily. Forms a heterodimer with Bax1.

The catalysed reaction is Couples ATP hydrolysis with the unwinding of duplex DNA by translocating in the 3'-5' direction.. The enzyme catalyses ATP + H2O = ADP + phosphate + H(+). ATP-dependent DNA translocase which moves along double-stranded DNA (dsDNA) in a 3'-5' direction, unwinding the DNA. The ThM domain grips the resulting 3'-ssDNA tail and functions as a wedge (particularly Phe-278), breaking dsDNA base pairs, probably using the energy from ATP hydrolysis to move along dsDNA. A DNA-dependent ATPase; double-stranded DNA (dsDNA) stimulates the activity more than single-stranded DNA (ssDNA), while Bax1 stimulates ATPase more. In an in vitro assay had no detectable helicase activity. Binds ssDNA better than dsDNA. Has very low ATPase activity that is stimulated by Bax1; dsDNA, Y-form DNA and a DNA substrate with a 6 base pair (bp) bubble in the center stimulate the XPB2-Bax1 ATPase activity about 10- 20-fold more than the absence of DNA. In an XPB2-Bax1-bubble DNA crystal (12 bp of dsDNA, a 6 base bubble and 6 bp of dsDNA) the short 6 bp arm is unwound. The 2 helicase and the ThM domains of XPB2 with the NTD and CRD domains of Bax1 encircle the DNA, forming a tunnel where the 12 bp dsDNA and the ds-ssDNA junction are located. The ThM domain is wedged between the ssDNA tails, with the 5' ssDNA contacting Bax1 and the 3' ssDNA in a channel in XPB2. Bax1 increases the affinity of XPB2 for forked DNA. This Sulfurisphaera tokodaii (strain DSM 16993 / JCM 10545 / NBRC 100140 / 7) (Sulfolobus tokodaii) protein is DNA 3'-5' translocase XPB2.